Reading from the N-terminus, the 86-residue chain is Cell division topological specificity factor (86 aa).

It belongs to the MinE family.

Prevents the cell division inhibition by proteins MinC and MinD at internal division sites while permitting inhibition at polar sites. This ensures cell division at the proper site by restricting the formation of a division septum at the midpoint of the long axis of the cell. This chain is Cell division topological specificity factor, found in Azoarcus sp. (strain BH72).